A 108-amino-acid polypeptide reads, in one-letter code: Ig kappa chain V-V region NQ5-89.4 (108 aa).

Positions 1-23 (DIQMTQTTSSLSASLGHRVTITC) are framework-1. A disulfide bridge links Cys23 with Cys88. A complementarity-determining-1 region spans residues 24–34 (SASQDISNYLN). The framework-2 stretch occupies residues 35 to 49 (WYQQKPDGTVKLLIY). The complementarity-determining-2 stretch occupies residues 50 to 56 (YTSRLHS). A framework-3 region spans residues 57-88 (GVPSRFSGSGSATDYSLTITNLQQEDXATYXC). The tract at residues 89-97 (QQGNTLPYT) is complementarity-determining-3. The interval 98–107 (FGGGTKLXIK) is framework-4.

Anti-2-phenyl oxazolone (PHOX) Antibody. This chain is Ig kappa chain V-V region NQ5-89.4, found in Mus musculus (Mouse).